The following is a 216-amino-acid chain: DNA-directed RNA polymerase subunit alpha (216 aa).

Belongs to the RNA polymerase alpha chain family. As to quaternary structure, in plastids the minimal PEP RNA polymerase catalytic core is composed of four subunits: alpha, beta, beta', and beta''. When a (nuclear-encoded) sigma factor is associated with the core the holoenzyme is formed, which can initiate transcription.

The protein resides in the plastid. Its subcellular location is the chloroplast. It carries out the reaction RNA(n) + a ribonucleoside 5'-triphosphate = RNA(n+1) + diphosphate. Its function is as follows. DNA-dependent RNA polymerase catalyzes the transcription of DNA into RNA using the four ribonucleoside triphosphates as substrates. This Euglena gracilis protein is DNA-directed RNA polymerase subunit alpha (rpoA).